A 322-amino-acid chain; its full sequence is Aldo-keto reductase family 1 member C13 (322 aa).

Residues 20–24 (GFGTY) and Asp50 each bind NAD(+). Tyr55 functions as the Proton donor in the catalytic mechanism. Residue His117 coordinates substrate. Residues 166–167 (SN), Gln190, 216–224 (FGALGTQRY), and 270–280 (QSFYESEMKEN) each bind NAD(+).

It belongs to the aldo/keto reductase family. In terms of assembly, monomer. The N-terminus is blocked.

It catalyses the reaction morphine + NAD(+) = morphinone + NADH + H(+). It carries out the reaction morphine + NADP(+) = morphinone + NADPH + H(+). With respect to regulation, strongly inhibited by sulfhydryl reagents and ketamine, but not by pyrazole, barbital and indomethacine. Its function is as follows. Catalyzes the dehydrogenation of morphine to morphinone. The enzyme also exhibits significant activity for a variety of cyclic and alicyclic alcohols. In addition to xenobiotics, the enzyme catalyzes the dehydrogenation of 17-beta-hydroxysteroids with much higher affinities than morphine. Uses both NAD and NADP, but the activity is much greater with NAD than with NADP. This chain is Aldo-keto reductase family 1 member C13 (AKR1C13), found in Mesocricetus auratus (Golden hamster).